The primary structure comprises 833 residues: MGKKTQKKNSKGRLDKYYYLAKEKGYRARSSFKIIQINEKYGHFLEKSKVVIDLCAAPGSWCQVASNLCPVNSLIIGVDIVPMKTMPNVITFQSDITTEDCRSKLRGYMKTWKADTVLHDGAPNVGLSWAQDAFTQSHLTLQALKLAVENLVVGGTFVTKIFRSKDYNKLIWVFQQLFEKVEATKPPASRNVSAEIFVVCKNFKAPKKLDPRLLDPKEVFEELPDGPQNMEAKVFNPEKKVRKRGGYEEGDYLLYHETGLMDFMKSEDPITMLGEYNKFIVDEEDHDWKIVKKLKQTTKEFLACIEDLKVLGRKDFKMILKWRKAARELLGLDEEEEKPEIEETPLTEEEQIEKELNTLQEKQRLSVKREKRKKNEMKQKEIVRMQLNMINPVDIGIEAAELGRESIFNLKTAEKTGILDKLAKGKRRMIFDQNELAIDNDIHIDENAPLDDRDELAEADELESQLDAMYSNYKERKSERDAKFRAKQARESSEADNWNGFEDKQSDEENEEETKDYVDDDDNSDLSDSDDDEAINQLIAKLKSRENSSKLSSKARALFSDSLFEGVEPDLPGKADLADSESVGDVKQLTKKRKLNPLPAEQISEAESSDEDSDFEIVANNEDGDVDSEYDSEEEAKRTKQEKHSKDIDIATVEAMTLAHQLALGHKTKHDLIEEGFNRYSFRDMENLPEWFVEEEKQHSKINKPITKEAAMAIKDKLKALNARPIKKVAEAKARKKHRAVARLEKLKKKAGLINDDSDKSEKDKAEEIAKLMRKVTKKAKQKPKVTVVVASGKNRGLSGRPKGVKGKYKMVDGVLKNEQRALKRIAKKHHKK.

Residues Gly-59, Trp-61, Asp-79, Asp-95, and Asp-120 each contribute to the S-adenosyl-L-methionine site. Lys-160 (proton acceptor) is an active-site residue. Coiled coils occupy residues 348–389 (EEEQ…QLNM) and 453–481 (RDELAEADELESQLDAMYSNYKERKSERD). Residues 477–493 (KSERDAKFRAKQARESS) show a composition bias toward basic and acidic residues. Disordered regions lie at residues 477–532 (KSER…SDDD), 592–645 (KRKL…EKHS), and 776–810 (VTKKAKQKPKVTVVVASGKNRGLSGRPKGVKGKYK). Acidic residues-rich tracts occupy residues 505–532 (QSDEENEEETKDYVDDDDNSDLSDSDDD) and 622–634 (EDGDVDSEYDSEE). The segment covering 635–645 (EAKRTKQEKHS) has biased composition (basic and acidic residues). A coiled-coil region spans residues 730 to 782 (AEAKARKKHRAVARLEKLKKKAGLINDDSDKSEKDKAEEIAKLMRKVTKKAKQ).

This sequence belongs to the class I-like SAM-binding methyltransferase superfamily. RNA methyltransferase RlmE family. SPB1 subfamily. Component of the nucleolar and nucleoplasmic pre-60S ribosomal particle.

The protein localises to the nucleus. It is found in the nucleolus. It catalyses the reaction a ribonucleotide in rRNA + S-adenosyl-L-methionine = a 2'-O-methylribonucleotide in rRNA + S-adenosyl-L-homocysteine + H(+). Required for proper assembly of pre-ribosomal particles during the biogenesis of the 60S ribosomal subunit. The protein is AdoMet-dependent rRNA methyltransferase SPB1 of Kluyveromyces lactis (strain ATCC 8585 / CBS 2359 / DSM 70799 / NBRC 1267 / NRRL Y-1140 / WM37) (Yeast).